Consider the following 357-residue polypeptide: Nicotinate-nucleotide--dimethylbenzimidazole phosphoribosyltransferase (357 aa).

Glu323 (proton acceptor) is an active-site residue.

The protein belongs to the CobT family.

The catalysed reaction is 5,6-dimethylbenzimidazole + nicotinate beta-D-ribonucleotide = alpha-ribazole 5'-phosphate + nicotinate + H(+). The protein operates within nucleoside biosynthesis; alpha-ribazole biosynthesis; alpha-ribazole from 5,6-dimethylbenzimidazole: step 1/2. Its function is as follows. Catalyzes the synthesis of alpha-ribazole-5'-phosphate from nicotinate mononucleotide (NAMN) and 5,6-dimethylbenzimidazole (DMB). This is Nicotinate-nucleotide--dimethylbenzimidazole phosphoribosyltransferase from Nitratidesulfovibrio vulgaris (strain ATCC 29579 / DSM 644 / CCUG 34227 / NCIMB 8303 / VKM B-1760 / Hildenborough) (Desulfovibrio vulgaris).